Consider the following 200-residue polypeptide: Ciliary neurotrophic factor (200 aa).

Belongs to the CNTF family. In terms of assembly, homodimer. Nervous system.

It is found in the cytoplasm. CNTF is a survival factor for various neuronal cell types. Seems to prevent the degeneration of motor axons after axotomy. This chain is Ciliary neurotrophic factor (CNTF), found in Homo sapiens (Human).